We begin with the raw amino-acid sequence, 207 residues long: Small ribosomal subunit protein uS4c (207 aa).

A disordered region spans residues 20–52; the sequence is GFSKKIDRNHTPPGQHGWKKKASDQKKSKESQY. The segment covering 40-52 has biased composition (basic and acidic residues); the sequence is KASDQKKSKESQY. Residues 97–158 enclose the S4 RNA-binding domain; sequence MRLDNIIYRL…NSQQLIKNYL (62 aa).

It belongs to the universal ribosomal protein uS4 family. Part of the 30S ribosomal subunit. Contacts protein S5. The interaction surface between S4 and S5 is involved in control of translational fidelity.

It is found in the plastid. In terms of biological role, one of the primary rRNA binding proteins, it binds directly to 16S rRNA where it nucleates assembly of the body of the 30S subunit. Its function is as follows. With S5 and S12 plays an important role in translational accuracy. The sequence is that of Small ribosomal subunit protein uS4c (rps4) from Prototheca wickerhamii.